The chain runs to 581 residues: Amino-acid acetyltransferase, mitochondrial (581 aa).

Positions 401 to 558 constitute an N-acetyltransferase domain; the sequence is FTLHNLIEDE…RIVGSEAVNI (158 aa).

The protein belongs to the acetyltransferase family.

It localises to the mitochondrion. It carries out the reaction L-glutamate + acetyl-CoA = N-acetyl-L-glutamate + CoA + H(+). It participates in amino-acid biosynthesis; L-arginine biosynthesis; N(2)-acetyl-L-ornithine from L-glutamate: step 1/4. N-acetylglutamate synthase involved in arginine biosynthesis. The chain is Amino-acid acetyltransferase, mitochondrial (ARG2) from Scheffersomyces stipitis (strain ATCC 58785 / CBS 6054 / NBRC 10063 / NRRL Y-11545) (Yeast).